Here is a 94-residue protein sequence, read N- to C-terminus: Integration host factor subunit beta (94 aa).

It belongs to the bacterial histone-like protein family. Heterodimer of an alpha and a beta chain.

This protein is one of the two subunits of integration host factor, a specific DNA-binding protein that functions in genetic recombination as well as in transcriptional and translational control. The sequence is that of Integration host factor subunit beta from Pseudomonas paraeruginosa (strain DSM 24068 / PA7) (Pseudomonas aeruginosa (strain PA7)).